Consider the following 229-residue polypeptide: ATP synthase subunit a (229 aa).

The next 6 helical transmembrane spans lie at 16–36 (YAHVATLGIATVAAVGIGAAA), 81–101 (YIPFFASVFFFILFNNLLGMI), 110–130 (NMNTTFGFGVLMFLFYNFQGV), 142–162 (FMGPVIFLAPLMFVIEIVSHI), 175–195 (VMMGDHTVLSVFLDLVPIGVP), and 196–216 (IPFYVMGLFVCFVQAFVFTLL).

It belongs to the ATPase A chain family. As to quaternary structure, F-type ATPases have 2 components, CF(1) - the catalytic core - and CF(0) - the membrane proton channel. CF(1) has five subunits: alpha(3), beta(3), gamma(1), delta(1), epsilon(1). CF(0) has three main subunits: a(1), b(2) and c(9-12). The alpha and beta chains form an alternating ring which encloses part of the gamma chain. CF(1) is attached to CF(0) by a central stalk formed by the gamma and epsilon chains, while a peripheral stalk is formed by the delta and b chains.

Its subcellular location is the cell inner membrane. Functionally, key component of the proton channel; it plays a direct role in the translocation of protons across the membrane. The polypeptide is ATP synthase subunit a (Bdellovibrio bacteriovorus (strain ATCC 15356 / DSM 50701 / NCIMB 9529 / HD100)).